We begin with the raw amino-acid sequence, 1090 residues long: Pullulanase (1090 aa).

Residues 1–19 (MLRYTRNALVLGSLVLLSG) form the signal peptide. Cys-20 carries the N-palmitoyl cysteine lipid modification. The S-diacylglycerol cysteine moiety is linked to residue Cys-20. Catalysis depends on Asp-684, which acts as the Nucleophile. The active-site Proton donor is the Glu-713.

This sequence belongs to the glycosyl hydrolase 13 family. As to quaternary structure, homotrimer.

It is found in the cell membrane. It catalyses the reaction Hydrolysis of (1-&gt;6)-alpha-D-glucosidic linkages in pullulan, amylopectin and glycogen, and in the alpha- and beta-limit dextrins of amylopectin and glycogen.. This is Pullulanase (pulA) from Klebsiella pneumoniae.